Consider the following 909-residue polypeptide: DNA mismatch repair protein MutS (909 aa).

Residue 614 to 621 (GPNMAGKS) coordinates ATP. The segment at 798 to 827 (LEENSPQNNDISKESSSSSNSHDKLESSVI) is disordered. Basic and acidic residues predominate over residues 818–827 (SHDKLESSVI).

It belongs to the DNA mismatch repair MutS family.

Its function is as follows. This protein is involved in the repair of mismatches in DNA. It is possible that it carries out the mismatch recognition step. This protein has a weak ATPase activity. In Clostridium novyi (strain NT), this protein is DNA mismatch repair protein MutS.